Reading from the N-terminus, the 518-residue chain is ATP synthase subunit alpha (518 aa).

Residue Gly170–Thr177 participates in ATP binding.

The protein belongs to the ATPase alpha/beta chains family. F-type ATPases have 2 components, CF(1) - the catalytic core - and CF(0) - the membrane proton channel. CF(1) has five subunits: alpha(3), beta(3), gamma(1), delta(1), epsilon(1). CF(0) has three main subunits: a(1), b(2) and c(9-12). The alpha and beta chains form an alternating ring which encloses part of the gamma chain. CF(1) is attached to CF(0) by a central stalk formed by the gamma and epsilon chains, while a peripheral stalk is formed by the delta and b chains.

It is found in the cell membrane. The enzyme catalyses ATP + H2O + 4 H(+)(in) = ADP + phosphate + 5 H(+)(out). Its function is as follows. Produces ATP from ADP in the presence of a proton gradient across the membrane. The alpha chain is a regulatory subunit. The sequence is that of ATP synthase subunit alpha from Mycoplasmoides gallisepticum (strain R(low / passage 15 / clone 2)) (Mycoplasma gallisepticum).